Here is a 341-residue protein sequence, read N- to C-terminus: MEQPQYNSYKVRKLDDPEEKKLAILKATQSIEKKFGSNTILNEEGKASQHVQALPSGILSLDCAIGIGGYPKGRLIELFGAESSGKTTVALQAVAETQKNGGYVAYIDAENSLDIEYAENLGVKSDSLIFAQPDTGEEAFYMINEFVRTGAFDLIVVDSVAALTPASEIDGVKMPGQQAKMMSEQLSQLVGKVNQTKTVIIFINQIRSTMSGLFLNKETTPGGSALKFYSSVRIEVKSGEKIKDGIDTIGKKTTLHTVKNKVSSPYKKPTVINIFGDGFSQEIDVVTTALQLGVVKKLGEWYSFNGQKLGRGIFGVKEYLSHHPSVFNALDNLTREALQFS.

80–87 (GAESSGKT) provides a ligand contact to ATP.

Belongs to the RecA family.

Its subcellular location is the cytoplasm. Functionally, can catalyze the hydrolysis of ATP in the presence of single-stranded DNA, the ATP-dependent uptake of single-stranded DNA by duplex DNA, and the ATP-dependent hybridization of homologous single-stranded DNAs. It interacts with LexA causing its activation and leading to its autocatalytic cleavage. The protein is Protein RecA, plasmid of Lactococcus lactis subsp. lactis (Streptococcus lactis).